The sequence spans 145 residues: Allergen MAG29 (145 aa).

Disordered stretches follow at residues 1–21 (KDDI…DDKQ) and 103–145 (AGGA…EEVD). Residues 104-137 (GGAGAGGMPGGFPGGFPGTDGSGGGAAGGDGGKS) are compositionally biased toward gly residues.

This sequence belongs to the heat shock protein 70 family.

In Dermatophagoides farinae (American house dust mite), this protein is Allergen MAG29 (MAG29).